The sequence spans 471 residues: Arginine biosynthesis bifunctional protein ArgJ, mitochondrial (471 aa).

6 residues coordinate substrate: T201, K230, T241, E328, N466, and T471. The active-site Nucleophile is T241.

Belongs to the ArgJ family. In terms of assembly, heterodimer of an alpha and a beta chain. The alpha and beta chains are autoproteolytically processed from a single precursor protein within the mitochondrion.

Its subcellular location is the mitochondrion matrix. It carries out the reaction N(2)-acetyl-L-ornithine + L-glutamate = N-acetyl-L-glutamate + L-ornithine. It catalyses the reaction L-glutamate + acetyl-CoA = N-acetyl-L-glutamate + CoA + H(+). It participates in amino-acid biosynthesis; L-arginine biosynthesis; L-ornithine and N-acetyl-L-glutamate from L-glutamate and N(2)-acetyl-L-ornithine (cyclic): step 1/1. It functions in the pathway amino-acid biosynthesis; L-arginine biosynthesis; N(2)-acetyl-L-ornithine from L-glutamate: step 1/4. In terms of biological role, catalyzes two activities which are involved in the cyclic version of arginine biosynthesis: the synthesis of acetylglutamate from glutamate and acetyl-CoA, and of ornithine by transacetylation between acetylornithine and glutamate. The protein is Arginine biosynthesis bifunctional protein ArgJ, mitochondrial of Ajellomyces capsulatus (strain NAm1 / WU24) (Darling's disease fungus).